A 426-amino-acid polypeptide reads, in one-letter code: Casein kinase I (426 aa).

The region spanning tyrosine 9 to valine 278 is the Protein kinase domain. ATP contacts are provided by residues isoleucine 15 to isoleucine 23 and lysine 38. The Proton acceptor role is filled by aspartate 128. Disordered regions lie at residues threonine 340–asparagine 360 and proline 377–lysine 426. Over residues serine 345 to asparagine 360 the composition is skewed to polar residues. Residues glutamine 386–threonine 404 show a composition bias toward low complexity. Over residues proline 414–lysine 426 the composition is skewed to polar residues.

The protein belongs to the protein kinase superfamily. CK1 Ser/Thr protein kinase family. Casein kinase I subfamily. In terms of assembly, monomer. In terms of processing, autophosphorylated.

The protein localises to the cytoplasm. The protein resides in the nucleus. The enzyme catalyses L-seryl-[protein] + ATP = O-phospho-L-seryl-[protein] + ADP + H(+). It carries out the reaction L-threonyl-[protein] + ATP = O-phospho-L-threonyl-[protein] + ADP + H(+). Casein kinases are operationally defined by their preferential utilization of acidic proteins such as caseins as substrates. Can phosphorylate a large number of proteins. May have a role in DNA repair mechanism and support vegetative growth of the cells. In Dictyostelium discoideum (Social amoeba), this protein is Casein kinase I (cak1-1).